We begin with the raw amino-acid sequence, 273 residues long: MAVSSENVKLLREMTGAGMLDCKKALEEANGDIDKAKEILRIKGLAKADKKASRETKEGLIVAKSTPSKGAMVELACETDFVARNGSFKELANKILDYVLENVGDTKGESRDSSILQGKIDGITIEELLKEAIAKIGENIQLKRYCVVEGPNFSYIHGGGRIGVLLSYEGDNLDVVKDVALQIAAMRPEFLSPETVPQDVIEREKAIYMEQAKKEGKPENMLEKIAEGKLKKFYEEKTLLHQKFIKDEKKTIQDYTKANNVTIKGFCRFEIGT.

Residues 79-82 form an involved in Mg(2+) ion dislocation from EF-Tu region; the sequence is TDFV.

It belongs to the EF-Ts family.

The protein resides in the cytoplasm. In terms of biological role, associates with the EF-Tu.GDP complex and induces the exchange of GDP to GTP. It remains bound to the aminoacyl-tRNA.EF-Tu.GTP complex up to the GTP hydrolysis stage on the ribosome. The chain is Elongation factor Ts from Hydrogenobaculum sp. (strain Y04AAS1).